The following is a 479-amino-acid chain: GTPase Der (479 aa).

EngA-type G domains lie at 3 to 167 (FKVA…GEAR) and 208 to 383 (MRIA…KVWN). GTP is bound by residues 9-16 (GRPNVGKS), 56-60 (DTAGF), 119-122 (NKAE), 214-221 (GRPNAGKS), 261-265 (DTAGM), and 326-329 (NKWD). Positions 384–468 (SRVSTGKLNR…PIRIALRTSD (85 aa)) constitute a KH-like domain.

It belongs to the TRAFAC class TrmE-Era-EngA-EngB-Septin-like GTPase superfamily. EngA (Der) GTPase family. As to quaternary structure, associates with the 50S ribosomal subunit.

GTPase that plays an essential role in the late steps of ribosome biogenesis. This chain is GTPase Der, found in Mesorhizobium japonicum (strain LMG 29417 / CECT 9101 / MAFF 303099) (Mesorhizobium loti (strain MAFF 303099)).